A 201-amino-acid polypeptide reads, in one-letter code: Putative amino-acid transporter Mb0498 (201 aa).

5 helical membrane passes run 25-45, 57-77, 104-124, 133-153, and 169-189; these read VLVIVALCGIADGALIAAGVG, MTLVARFGGAAFLIGYALLAA, LVVTFLNPHVYLDTVVLIGAL, WFFGAGAWAASVVWFAVLGFS, and ILDALVAVTMIGVAVVVLVTS.

Belongs to the LysE/ArgO transporter (TC 2.A.75) family.

The protein resides in the cell membrane. The sequence is that of Putative amino-acid transporter Mb0498 from Mycobacterium bovis (strain ATCC BAA-935 / AF2122/97).